Reading from the N-terminus, the 58-residue chain is Small ribosomal subunit protein bS21 (58 aa).

The segment at 36 to 58 (EFYEKPSVKRKRKSEAARKRKKF) is disordered. Residues 43 to 58 (VKRKRKSEAARKRKKF) show a composition bias toward basic residues.

It belongs to the bacterial ribosomal protein bS21 family.

The polypeptide is Small ribosomal subunit protein bS21 (Streptococcus uberis (strain ATCC BAA-854 / 0140J)).